The sequence spans 121 residues: Small ribosomal subunit protein uS13 (121 aa).

The disordered stretch occupies residues 92-121 (RKGLPVRGQSSKTNARTVKGPRKTVANKKK). The segment covering 110–121 (KGPRKTVANKKK) has biased composition (basic residues).

The protein belongs to the universal ribosomal protein uS13 family. In terms of assembly, part of the 30S ribosomal subunit. Forms a loose heterodimer with protein S19. Forms two bridges to the 50S subunit in the 70S ribosome.

Functionally, located at the top of the head of the 30S subunit, it contacts several helices of the 16S rRNA. In the 70S ribosome it contacts the 23S rRNA (bridge B1a) and protein L5 of the 50S subunit (bridge B1b), connecting the 2 subunits; these bridges are implicated in subunit movement. Contacts the tRNAs in the A and P-sites. This is Small ribosomal subunit protein uS13 from Mycoplasma mycoides subsp. mycoides SC (strain CCUG 32753 / NCTC 10114 / PG1).